The following is a 684-amino-acid chain: Transcriptional regulatory protein RCO1 (684 aa).

Residue M1 is modified to N-acetylmethionine. Residues 1–48 (MDTSKKDTTRSPSHSNSSSPSSSSLSSSSSKEKKRPKRLSSQNVNYDL) are disordered. The span at 10-29 (RSPSHSNSSSPSSSSLSSSS) shows a compositional bias: low complexity. S68 carries the phosphoserine modification. The segment at 260–309 (EDFCSACNQSGSFLCCDTCPKSFHFLCLDPPIDPNNLPKGDWHCNECKFK) adopts a PHD-type 1 zinc-finger fold. The segment at 414–472 (FLICYKCNQTRLGSWSHPENSRLIMTCDYCQTPWHLDCVPRASFKNLGSKWKCPLHSPT) adopts a PHD-type 2; atypical zinc-finger fold. S683 is subject to Phosphoserine.

As to quaternary structure, component of the RPD3C(S) complex composed of at least EAF3, RCO1, RPD3, SIN3, and UME1.

It is found in the nucleus. Functionally, catalytic component of the RPD3C(S) histone deacetylase complex responsible for the deacetylation of lysine residues on the N-terminal part of the core histones (H2A, H2B, H3 and H4). Histone deacetylation gives a tag for epigenetic repression and plays an important role in transcriptional regulation, cell cycle progression, DNA damage response, osmotic stress response and developmental events. This is Transcriptional regulatory protein RCO1 (RCO1) from Saccharomyces cerevisiae (strain ATCC 204508 / S288c) (Baker's yeast).